The sequence spans 550 residues: CCR4-NOT transcription complex subunit 6-like-B (550 aa).

The interval methionine 1–lysine 148 is required for interaction with cnot1, cnot3 and cnot7. 4 LRR repeats span residues histidine 52–leucine 73, asparagine 75–valine 96, serine 98–phenylalanine 120, and arginine 121–proline 143. Residues methionine 153–arginine 550 are nuclease domain. Residue glutamate 235 coordinates Mg(2+). Residues glutamate 235, glutamate 271, histidine 355, and proline 360 each coordinate substrate. Aspartate 405 contributes to the Mg(2+) binding site. Aspartate 405 (proton donor/acceptor) is an active-site residue. The substrate site is built by asparagine 407, asparagine 474, and phenylalanine 479.

It belongs to the CCR4/nocturin family. In terms of assembly, component of the CCR4-NOT complex. It depends on Mg(2+) as a cofactor.

The protein localises to the cytoplasm. It localises to the nucleus. It catalyses the reaction Exonucleolytic cleavage of poly(A) to 5'-AMP.. Poly(A) nuclease with 3'-5' RNase activity. Catalytic component of the CCR4-NOT complex which is one of the major cellular mRNA deadenylases and is linked to various cellular processes including bulk mRNA degradation, miRNA-mediated repression, translational repression during translational initiation and general transcription regulation. Additional complex functions may be a consequence of its influence on mRNA expression. This is CCR4-NOT transcription complex subunit 6-like-B (cnot6l-b) from Xenopus laevis (African clawed frog).